We begin with the raw amino-acid sequence, 558 residues long: Urocanate hydratase (558 aa).

NAD(+)-binding positions include 54 to 55 (GG), Gln132, 178 to 180 (GMG), Glu198, 244 to 245 (NA), 265 to 269 (QTSAH), 275 to 276 (YL), and Tyr324. Residue Cys412 is part of the active site. Gly494 is an NAD(+) binding site.

This sequence belongs to the urocanase family. NAD(+) serves as cofactor.

The protein localises to the cytoplasm. The catalysed reaction is 4-imidazolone-5-propanoate = trans-urocanate + H2O. The protein operates within amino-acid degradation; L-histidine degradation into L-glutamate; N-formimidoyl-L-glutamate from L-histidine: step 2/3. In terms of biological role, catalyzes the conversion of urocanate to 4-imidazolone-5-propionate. This Acinetobacter baumannii (strain ACICU) protein is Urocanate hydratase.